A 196-amino-acid polypeptide reads, in one-letter code: tRNA(Phe) 7-((3-amino-3-carboxypropyl)-4-demethylwyosine(37)-N(4))-methyltransferase (196 aa).

The protein belongs to the TYW3 family.

The catalysed reaction is 4-demethyl-7-[(3S)-3-amino-3-carboxypropyl]wyosine(37) in tRNA(Phe) + S-adenosyl-L-methionine = 7-[(3S)-3-amino-3-carboxypropyl]wyosine(37) in tRNA(Phe) + S-adenosyl-L-homocysteine + H(+). S-adenosyl-L-methionine-dependent methyltransferase that acts as a component of the wyosine derivatives biosynthesis pathway. Probably methylates N-4 position of wybutosine-86 to produce wybutosine-72. This chain is tRNA(Phe) 7-((3-amino-3-carboxypropyl)-4-demethylwyosine(37)-N(4))-methyltransferase, found in Archaeoglobus fulgidus (strain ATCC 49558 / DSM 4304 / JCM 9628 / NBRC 100126 / VC-16).